A 622-amino-acid chain; its full sequence is Low affinity potassium transport system protein Kup (622 aa).

A run of 12 helical transmembrane segments spans residues 9–29, 49–69, 101–121, 137–157, 165–185, 212–232, 247–267, 279–299, 337–357, 363–383, 397–417, and 419–439; these read LPAVTLAAIGVVYGDIGTSPL, VFGFLSLIFWLLVLVVSLKYL, VLVIMGLIGGSFFYGEVVITP, PSMDSYIVPLSIVVLTLLFII, VGKLFAPVMLIWFLTLGVLGA, AVSFFALGAVVLAITGVEALY, WFTVVLPSLVLNYFGQGALLL, LLAPDWALIPLMILATLATII, IYIPAINWMLYIAVVIVIVSF, LAAAYGIAVTGTMVITSILFC, AWVLLAGLLVIDVPMFLANVV, and ILSGGWLPLALGMVMFIIMTT.

The protein belongs to the HAK/KUP transporter (TC 2.A.72) family.

The protein localises to the cell inner membrane. It catalyses the reaction K(+)(in) + H(+)(in) = K(+)(out) + H(+)(out). Its function is as follows. Responsible for the low-affinity transport of potassium into the cell. Likely operates as a K(+):H(+) symporter. This is Low affinity potassium transport system protein Kup from Pectobacterium carotovorum subsp. carotovorum (strain PC1).